A 567-amino-acid chain; its full sequence is MRFSKAYIKTLKETPKEAEIASHKLMLRAGMIKKLASGIYAYLPLGYRTIKKIENIVREEMDRAGALELLMPVVQPAELWQESGRWDVMGPEMLRLKDRHERDFVLSPTQEEMITAIIRSDISSYKSLPINLYHIQTKFRDERRPRFGLMRGREFTMKDAYSFHTSQESLDEEFLNMRDTYTRIFTRCGLKFRPVDADSGNIGGSGSQEFQVLAESGEDEIIYSDGSEYAANIEKAVSELINPPKEELKEVELVHTPDCPTIESLAKYLDVPLERTVKALTYKDMGTDEIYMVLIRGDFEVNEVKLKNILNAVEVEMATDEEIEKIGLKKGYIGPYKLPAKIKIVADLSVPEVSNHIVGSHQKDYHYKNVNYDRDYTADIVTDIRKVRVGDNCITGGKLHSARGIECGQIFKLGDKYSKAMNATYLDEKGKTQFMLMGCYGIGVTRTMAASIEQNNDENGIIWPVSIAPYIVDVIPANIKNEVQVSLAEKIYNELQEEKIDVMLDDRDEKPGFKFKDADLIGFPFKVVVGKRADEGIVELKIRRTGETLEVSQNEVIAKIKELMRIY.

Belongs to the class-II aminoacyl-tRNA synthetase family. ProS type 1 subfamily. In terms of assembly, homodimer.

Its subcellular location is the cytoplasm. It catalyses the reaction tRNA(Pro) + L-proline + ATP = L-prolyl-tRNA(Pro) + AMP + diphosphate. Its function is as follows. Catalyzes the attachment of proline to tRNA(Pro) in a two-step reaction: proline is first activated by ATP to form Pro-AMP and then transferred to the acceptor end of tRNA(Pro). As ProRS can inadvertently accommodate and process non-cognate amino acids such as alanine and cysteine, to avoid such errors it has two additional distinct editing activities against alanine. One activity is designated as 'pretransfer' editing and involves the tRNA(Pro)-independent hydrolysis of activated Ala-AMP. The other activity is designated 'posttransfer' editing and involves deacylation of mischarged Ala-tRNA(Pro). The misacylated Cys-tRNA(Pro) is not edited by ProRS. In Fusobacterium nucleatum subsp. nucleatum (strain ATCC 25586 / DSM 15643 / BCRC 10681 / CIP 101130 / JCM 8532 / KCTC 2640 / LMG 13131 / VPI 4355), this protein is Proline--tRNA ligase.